The following is a 336-amino-acid chain: MTLDLNKLRFGSELIKRGFSAMTKGGVIMDVTTADQAKIAEAAGAVAVMALERVPADIRAAGGVARMADPMKIKEIMDAVSIPVMAKVRIGHISEAYVLEKIGVDMLDESEVLTPADPFFHLYKKNLTVPVVSGARNLPEAVRRIFEGAAMIRTKGEAGTGNIIEAVRHIRKVNEEISVLKRMSDEQLRAVASNISASYFVLREEASKDLMGVEGKLSYDSAYAGMGRSRIEREILAILRQIRRMGRLPVVNFAAGGVATPADGALMMELGADGVFVGSGIFKSPNPEKMARSIVEAVENYRDYDVVEKASEGLQGMPGVDIESIPKDMRLQERGW.

D-ribose 5-phosphate is bound at residue Asp30. The active-site Schiff-base intermediate with D-ribose 5-phosphate is the Lys87. Gly159 is a binding site for D-ribose 5-phosphate. Arg171 serves as a coordination point for D-glyceraldehyde 3-phosphate. Residues Gly257 and 278–279 each bind D-ribose 5-phosphate; that span reads GS.

The protein belongs to the PdxS/SNZ family. In the presence of PdxT, forms a dodecamer of heterodimers.

It catalyses the reaction aldehydo-D-ribose 5-phosphate + D-glyceraldehyde 3-phosphate + L-glutamine = pyridoxal 5'-phosphate + L-glutamate + phosphate + 3 H2O + H(+). It participates in cofactor biosynthesis; pyridoxal 5'-phosphate biosynthesis. In terms of biological role, catalyzes the formation of pyridoxal 5'-phosphate from ribose 5-phosphate (RBP), glyceraldehyde 3-phosphate (G3P) and ammonia. The ammonia is provided by the PdxT subunit. Can also use ribulose 5-phosphate and dihydroxyacetone phosphate as substrates, resulting from enzyme-catalyzed isomerization of RBP and G3P, respectively. The polypeptide is Pyridoxal 5'-phosphate synthase subunit PdxS (Thermoplasma acidophilum (strain ATCC 25905 / DSM 1728 / JCM 9062 / NBRC 15155 / AMRC-C165)).